A 358-amino-acid chain; its full sequence is 5,10-methenyltetrahydromethanopterin hydrogenase (358 aa).

Belongs to the HMD family. In terms of assembly, homotetramer.

It catalyses the reaction 5,10-methenyl-5,6,7,8-tetrahydromethanopterin + H2 = 5,10-methylenetetrahydromethanopterin + H(+). It participates in one-carbon metabolism; methanogenesis from CO(2); 5,10-methylene-5,6,7,8-tetrahydromethanopterin from 5,10-methenyl-5,6,7,8-tetrahydromethanopterin (hydrogen route): step 1/1. With respect to regulation, activity requires salt; 100 mM potassium phosphate, potassium chloride, and sodium chloride are equally effective. Catalyzes the reversible reduction of methenyl-H(4)MPT(+) to methylene-H(4)MPT. In Methanopyrus kandleri (strain AV19 / DSM 6324 / JCM 9639 / NBRC 100938), this protein is 5,10-methenyltetrahydromethanopterin hydrogenase.